An 880-amino-acid chain; its full sequence is DNA gyrase subunit A (880 aa).

The Topo IIA-type catalytic domain maps to 35 to 530 (LPDVRDGLKP…ASGDIDLEDL (496 aa)). Y123 functions as the O-(5'-phospho-DNA)-tyrosine intermediate in the catalytic mechanism. Residues 557–563 (QRRGGKG) carry the GyrA-box motif.

It belongs to the type II topoisomerase GyrA/ParC subunit family. In terms of assembly, heterotetramer, composed of two GyrA and two GyrB chains. In the heterotetramer, GyrA contains the active site tyrosine that forms a transient covalent intermediate with DNA, while GyrB binds cofactors and catalyzes ATP hydrolysis.

The protein localises to the cytoplasm. The catalysed reaction is ATP-dependent breakage, passage and rejoining of double-stranded DNA.. Its function is as follows. A type II topoisomerase that negatively supercoils closed circular double-stranded (ds) DNA in an ATP-dependent manner to modulate DNA topology and maintain chromosomes in an underwound state. Negative supercoiling favors strand separation, and DNA replication, transcription, recombination and repair, all of which involve strand separation. Also able to catalyze the interconversion of other topological isomers of dsDNA rings, including catenanes and knotted rings. Type II topoisomerases break and join 2 DNA strands simultaneously in an ATP-dependent manner. The chain is DNA gyrase subunit A from Haemophilus influenzae (strain ATCC 51907 / DSM 11121 / KW20 / Rd).